The chain runs to 386 residues: Putative membrane-bound transacylase BcsY (386 aa).

The next 10 helical transmembrane spans lie at L37 to V57, L91 to L111, I118 to V138, L156 to T176, L181 to G201, A237 to Y257, A258 to P278, L290 to V310, A322 to V342, and A362 to V382.

Belongs to the acyltransferase 3 family.

The protein localises to the cell inner membrane. The protein operates within glycan metabolism; bacterial cellulose biosynthesis. In terms of biological role, may acylate a glucose moiety into cellulose fibrils, in cooperation with BcsABII and BcsCII. This chain is Putative membrane-bound transacylase BcsY (bcsY), found in Komagataeibacter xylinus (Gluconacetobacter xylinus).